A 105-amino-acid polypeptide reads, in one-letter code: Guanidinium exporter (105 aa).

Residue M1 is a topological domain, cytoplasmic. The helical transmembrane segment at 2 to 19 (SWIVLLIAGLLEVVWAIG) threads the bilayer. At 20–28 (LKYTHGFTR) the chain is on the periplasmic side. A helical membrane pass occupies residues 29-48 (LTPSIITIAAMIVSIAMLSW). Topologically, residues 49-54 (AMRTLP) are cytoplasmic. A helical transmembrane segment spans residues 55-77 (VGTAYAVWTGIGAVGAAITGILL). Residues 78–86 (LGESASPAR) are Periplasmic-facing. The helical transmembrane segment at 87 to 104 (LLSLGLIVAGIIGLKLST) threads the bilayer. H105 is a topological domain (cytoplasmic).

Belongs to the drug/metabolite transporter (DMT) superfamily. Small multidrug resistance (SMR) (TC 2.A.7.1) family. Gdx/SugE subfamily.

Its subcellular location is the cell inner membrane. In terms of biological role, guanidinium ion exporter. Couples guanidinium export to the proton motive force, exchanging one guanidinium ion for two protons. This chain is Guanidinium exporter, found in Citrobacter freundii.